Reading from the N-terminus, the 260-residue chain is Uroplakin-1b (260 aa).

Residues 1–15 (MAKDDSTVRCFQGLL) are Cytoplasmic-facing. A helical transmembrane segment spans residues 16-36 (IFGHVIVGMCGIALTAECIFF). Over 37 to 59 (VSDQHSLYPLLEATNNDDIFGAA) the chain is Extracellular. The helical transmembrane segment at 60–80 (WIGMFVGICLFCLSVLAIVGI) threads the bilayer. Over 81–86 (MKSNRK) the chain is Cytoplasmic. Residues 87 to 107 (ILLAYFIMMFIVYGFEVASCI) form a helical membrane-spanning segment. The Extracellular segment spans residues 108–229 (TAATQRDFFT…ELISGPMDRH (122 aa)). A helical transmembrane segment spans residues 230–250 (AWGVAWFGFAILCWTFWVLLG). Topologically, residues 251 to 260 (TMFYWSRIEY) are cytoplasmic.

Belongs to the tetraspanin (TM4SF) family. In terms of assembly, heterodimer with uroplakin-3A (UPK3A) or uroplakin-3B (UPK3B). In terms of processing, N-glycosylated with high-mannose oligosaccharides.

The protein localises to the membrane. Its function is as follows. Component of the asymmetric unit membrane (AUM); a highly specialized biomembrane elaborated by terminally differentiated urothelial cells. May play an important role in normal bladder epithelial physiology, possibly in regulating membrane permeability of superficial umbrella cells or in stabilizing the apical membrane through AUM/cytoskeletal interactions. In Rattus norvegicus (Rat), this protein is Uroplakin-1b (Upk1b).